The primary structure comprises 94 residues: Small ribosomal subunit protein uS19m (94 aa).

It belongs to the universal ribosomal protein uS19 family.

The protein resides in the mitochondrion. The sequence is that of Small ribosomal subunit protein uS19m (RPS19) from Petunia hybrida (Petunia).